Reading from the N-terminus, the 171-residue chain is Iron-sulfur cluster assembly protein 1 (171 aa).

A mitochondrion-targeting transit peptide spans 1-55 (MLRAGGRRLLAPGLRRVLGGGAAAPVAVGGAKAYHERVVDHYENPRNVGSFENDD).

It belongs to the NifU family. In terms of assembly, component of the core Fe-S cluster (ISC) assembly machinery. It depends on [2Fe-2S] cluster as a cofactor.

The protein resides in the mitochondrion matrix. Its pathway is cofactor biosynthesis; iron-sulfur cluster biosynthesis. Functionally, scaffold protein for the de novo synthesis of iron-sulfur (Fe-S) clusters within mitochondria, which is required for maturation of both mitochondrial and cytoplasmic [2Fe-2S] and [4Fe-4S] proteins. First, a [2Fe-2S] cluster is transiently assembled on the scaffold protein ISCU (ISU1, ISU2 or ISU3). In a second step, the cluster is released from ISCU, transferred to a glutaredoxin, followed by the formation of mitochondrial [2Fe-2S] proteins, the synthesis of [4Fe-4S] clusters and their target-specific insertion into the recipient apoproteins. Cluster assembly on ISCU depends on the function of the cysteine desulfurase complex NFS1-ISD11, which serves as the sulfur donor for cluster synthesis, the iron-binding protein frataxin as the putative iron donor, and the electron transfer chain comprised of ferredoxin reductase and ferredoxin, which receive their electrons from NADH. In Oryza sativa subsp. japonica (Rice), this protein is Iron-sulfur cluster assembly protein 1.